A 265-amino-acid chain; its full sequence is Orotidine 5'-phosphate decarboxylase (265 aa).

Substrate-binding positions include D38, 60-62 (KTH), 92-101 (DRKFADIGKT), Y218, and R236. K94 serves as the catalytic Proton donor.

Belongs to the OMP decarboxylase family.

The enzyme catalyses orotidine 5'-phosphate + H(+) = UMP + CO2. It functions in the pathway pyrimidine metabolism; UMP biosynthesis via de novo pathway; UMP from orotate: step 2/2. This chain is Orotidine 5'-phosphate decarboxylase (URA3), found in Cyberlindnera fabianii (Yeast).